A 345-amino-acid chain; its full sequence is Anthranilate phosphoribosyltransferase (345 aa).

5-phospho-alpha-D-ribose 1-diphosphate is bound by residues Gly-84, 87–88, Thr-92, 94–97, 112–120, and Ser-124; these read GD, NVTT, and KHGNRSVSS. Gly-84 is an anthranilate binding site. A Mg(2+)-binding site is contributed by Thr-96. Asn-115 contributes to the anthranilate binding site. Arg-170 is a binding site for anthranilate. Mg(2+) contacts are provided by Asp-228 and Glu-229.

It belongs to the anthranilate phosphoribosyltransferase family. In terms of assembly, homodimer. The cofactor is Mg(2+).

It catalyses the reaction N-(5-phospho-beta-D-ribosyl)anthranilate + diphosphate = 5-phospho-alpha-D-ribose 1-diphosphate + anthranilate. It participates in amino-acid biosynthesis; L-tryptophan biosynthesis; L-tryptophan from chorismate: step 2/5. Its function is as follows. Catalyzes the transfer of the phosphoribosyl group of 5-phosphorylribose-1-pyrophosphate (PRPP) to anthranilate to yield N-(5'-phosphoribosyl)-anthranilate (PRA). The chain is Anthranilate phosphoribosyltransferase from Corynebacterium aurimucosum (strain ATCC 700975 / DSM 44827 / CIP 107346 / CN-1) (Corynebacterium nigricans).